A 28-amino-acid chain; its full sequence is Conotoxin Cl6a (28 aa).

Cystine bridges form between C3-C13, C7-C19, and C12-C24.

As to expression, expressed by the venom duct.

It localises to the secreted. The chain is Conotoxin Cl6a from Californiconus californicus (California cone).